A 143-amino-acid polypeptide reads, in one-letter code: Nucleoside diphosphate kinase (143 aa).

6 residues coordinate ATP: lysine 11, phenylalanine 59, arginine 87, threonine 93, arginine 104, and asparagine 114. Catalysis depends on histidine 117, which acts as the Pros-phosphohistidine intermediate.

This sequence belongs to the NDK family. Homotetramer. It depends on Mg(2+) as a cofactor.

The protein resides in the cytoplasm. It carries out the reaction a 2'-deoxyribonucleoside 5'-diphosphate + ATP = a 2'-deoxyribonucleoside 5'-triphosphate + ADP. It catalyses the reaction a ribonucleoside 5'-diphosphate + ATP = a ribonucleoside 5'-triphosphate + ADP. In terms of biological role, major role in the synthesis of nucleoside triphosphates other than ATP. The ATP gamma phosphate is transferred to the NDP beta phosphate via a ping-pong mechanism, using a phosphorylated active-site intermediate. The chain is Nucleoside diphosphate kinase from Alteromonas mediterranea (strain DSM 17117 / CIP 110805 / LMG 28347 / Deep ecotype).